The primary structure comprises 1061 residues: Chimeric ERCC6-PGBD3 protein (1061 aa).

The interval 1-39 is disordered; that stretch reads MPNEGIPHSSQTQEQDCLQSQPVSNNEEMAIKQESGGDG. The span at 8 to 27 shows a compositional bias: polar residues; that stretch reads HSSQTQEQDCLQSQPVSNNE. Residue serine 158 is modified to Phosphoserine. Residue lysine 255 forms a Glycyl lysine isopeptide (Lys-Gly) (interchain with G-Cter in SUMO2) linkage. Disordered stretches follow at residues 287-323, 344-466, 494-521, and 537-573; these read KQGC…VLSK, GKVG…QRLS, VIQP…INNL, and SDAE…SRRR. The span at 353 to 363 shows a compositional bias: basic and acidic residues; sequence RPWESDMRPEA. A compositionally biased stretch (acidic residues) spans 364–392; it reads EGDSEGEESEYFPTEEEEEEEDDEVEGAE. Phosphoserine is present on residues serine 429 and serine 430. The span at 451–462 shows a compositional bias: basic and acidic residues; it reads RYRDDGDEDYYK. The segment covering 506 to 515 has biased composition (acidic residues); the sequence is SDEESGDEEG. Residue serine 554 is modified to Phosphoserine.

In terms of tissue distribution, expressed in heart and oocytes, but not in granulosa cells (at protein level).

The protein resides in the nucleus. In terms of biological role, involved in repair of DNA damage following UV irradiation, acting either in the absence of ERCC6 or synergistically with ERCC6. Involved in the regulation of gene expression. In the absence of ERCC6, induces the expression of genes characteristic of interferon-like antiviral responses. This response is almost completely suppressed in the presence of ERCC6. In the presence of ERCC6, regulates the expression of genes involved in metabolism regulation, including IGFBP5 and IGFBP7. In vitro binds to PGBD3-related transposable elements, called MER85s; these non-autonomous 140 bp elements are characterized by the presence of PGBD3 terminal inverted repeats and the absence of internal transposase ORF. The polypeptide is Chimeric ERCC6-PGBD3 protein (Homo sapiens (Human)).